A 485-amino-acid chain; its full sequence is Ribulose bisphosphate carboxylase large chain (485 aa).

Positions 1–2 (MS) are excised as a propeptide. Pro-3 is subject to N-acetylproline. An N6,N6,N6-trimethyllysine modification is found at Lys-14. Substrate contacts are provided by Asn-123 and Thr-173. Lys-175 functions as the Proton acceptor in the catalytic mechanism. Lys-177 contributes to the substrate binding site. 3 residues coordinate Mg(2+): Lys-201, Asp-203, and Glu-204. N6-carboxylysine is present on Lys-201. His-294 serves as the catalytic Proton acceptor. Residues Arg-295, His-327, and Ser-379 each coordinate substrate.

The protein belongs to the RuBisCO large chain family. Type I subfamily. Heterohexadecamer of 8 large chains and 8 small chains; disulfide-linked. The disulfide link is formed within the large subunit homodimers. The cofactor is Mg(2+). The disulfide bond which can form in the large chain dimeric partners within the hexadecamer appears to be associated with oxidative stress and protein turnover.

It is found in the plastid. Its subcellular location is the chloroplast. The catalysed reaction is 2 (2R)-3-phosphoglycerate + 2 H(+) = D-ribulose 1,5-bisphosphate + CO2 + H2O. The enzyme catalyses D-ribulose 1,5-bisphosphate + O2 = 2-phosphoglycolate + (2R)-3-phosphoglycerate + 2 H(+). RuBisCO catalyzes two reactions: the carboxylation of D-ribulose 1,5-bisphosphate, the primary event in carbon dioxide fixation, as well as the oxidative fragmentation of the pentose substrate in the photorespiration process. Both reactions occur simultaneously and in competition at the same active site. The chain is Ribulose bisphosphate carboxylase large chain from Flaveria pringlei.